A 516-amino-acid chain; its full sequence is MMTRVRSAVSSIIGGIMASGTGAHDSHPDLPLRFPYSRPDFLALSPDEVECSADHISRPILILKEMKLPWATGYAEVINAGKSALNEDQACCEVVELRKRPADPSSVSYTPSRRRSSLPSGDVLDTIHNPEVKELDFHYWALFDGHGGSGAAVFAAKFLHLHIEEQLQEVLEILQDPGLQPPTCLGEESPNPQLHASASGSQRGLSRAASLRGAAGAPGSPNTMAPRFFMEKKIKQESLVVGAIENAFKEMDAHIARERCAYSISGGCTALAVMFLLGKLYVANAGDSRALIVRAGELITMSSSFTPESERQRLQFLAHLQPSLLGSDFTHLEFPRRVTKREIGKRMLYRDFTMNGWAYKTVQEEDLKFPLIYGEGKKARVLATIGITRGLGDHDLKVHDSDIAIKPFLSCSPEVQVYNLCQFEHGADDVLILATDGLWDVLSNQEVADAVSGFLGNCDPDDQHRYTMAAQDLVMKARGILKDRGWRIAGDRLGSGDDISVFIIPLMYGTQQPQPS.

Disordered regions lie at residues Ala-102–Asp-122 and Pro-181–Gln-202. The 401-residue stretch at Ser-106–Leu-506 folds into the PPM-type phosphatase domain. Over residues Pro-190–Gln-202 the composition is skewed to polar residues.

The protein belongs to the PP2C family.

It localises to the nucleus. Its subcellular location is the cytoplasm. The enzyme catalyses O-phospho-L-seryl-[protein] + H2O = L-seryl-[protein] + phosphate. The catalysed reaction is O-phospho-L-threonyl-[protein] + H2O = L-threonyl-[protein] + phosphate. The protein is Protein phosphatase 1H (ppm1h) of Danio rerio (Zebrafish).